The primary structure comprises 426 residues: Enolase (426 aa).

Residue Gln163 participates in (2R)-2-phosphoglycerate binding. Glu205 acts as the Proton donor in catalysis. 3 residues coordinate Mg(2+): Asp242, Glu283, and Asp310. (2R)-2-phosphoglycerate is bound by residues Lys335, Arg364, Ser365, and Lys386. Lys335 (proton acceptor) is an active-site residue.

The protein belongs to the enolase family. Requires Mg(2+) as cofactor.

The protein resides in the cytoplasm. It is found in the secreted. It localises to the cell surface. It carries out the reaction (2R)-2-phosphoglycerate = phosphoenolpyruvate + H2O. The protein operates within carbohydrate degradation; glycolysis; pyruvate from D-glyceraldehyde 3-phosphate: step 4/5. Functionally, catalyzes the reversible conversion of 2-phosphoglycerate (2-PG) into phosphoenolpyruvate (PEP). It is essential for the degradation of carbohydrates via glycolysis. This chain is Enolase, found in Beutenbergia cavernae (strain ATCC BAA-8 / DSM 12333 / CCUG 43141 / JCM 11478 / NBRC 16432 / NCIMB 13614 / HKI 0122).